We begin with the raw amino-acid sequence, 410 residues long: Enterobactin exporter EntS (410 aa).

The Cytoplasmic portion of the chain corresponds to 1–21; the sequence is MNKQSWLLNLSLLKTHPAFRA. The helical transmembrane segment at 22-42 threads the bilayer; that stretch reads VFLARFISIVSLGLLGVAVPV. Residues 43–55 are Periplasmic-facing; that stretch reads QIQMMTHSTWQVG. The chain crosses the membrane as a helical span at residues 56–76; sequence LSVTLTGGAMFVGLMVGGVLA. Residues 77 to 83 are Cytoplasmic-facing; sequence DRYERKK. A helical transmembrane segment spans residues 84–104; the sequence is VILLARGTCGIGFIGLCLNAL. Residues 105–109 are Periplasmic-facing; sequence LPEPS. A helical membrane pass occupies residues 110–130; that stretch reads LLAIYLLGLWDGFFASLGVTA. Topologically, residues 131 to 156 are cytoplasmic; the sequence is LLAATSALVGRENLMQAGAITMLTVR. The chain crosses the membrane as a helical span at residues 157 to 177; sequence LGSVISPMIGGLLLATGGVAW. Asn-178 is a topological domain (periplasmic). Residues 179–199 form a helical membrane-spanning segment; sequence YGLAAAGTFITLLPLLSLPEL. Residues 200–218 are Cytoplasmic-facing; sequence PPPPQPLEHPLKSLLAGFR. Residues 219–233 traverse the membrane as a helical segment; it reads FLLASPLLGGLLTMA. The Periplasmic segment spans residues 234 to 250; that stretch reads SAVLVLYPALADNWQMS. A helical membrane pass occupies residues 251-271; the sequence is AAQIGFLYAAIPLGAAIGALT. Residues 272–281 lie on the Cytoplasmic side of the membrane; the sequence is SGKLAHSARP. Residues 282–301 form a helical membrane-spanning segment; it reads GLLMLLSTLGSFLAIGLFGL. The Periplasmic portion of the chain corresponds to 302-307; the sequence is MPMWIL. Residues 308–330 traverse the membrane as a helical segment; the sequence is GVVCLALFGWLSAVSSLLQYTML. Residues 331 to 350 are Cytoplasmic-facing; sequence QTQTPEAMLGRINGLWTAQN. Residues 351–371 traverse the membrane as a helical segment; that stretch reads VTGDAIGAALLGGLGAMMTPV. A topological domain (periplasmic) is located at residue Ala-372. Residues 373–393 traverse the membrane as a helical segment; that stretch reads SASASGFGLLIIGVLLLLVLV. Topologically, residues 394-410 are cytoplasmic; that stretch reads ELRRFRQTPPQVTASDS.

The protein belongs to the major facilitator superfamily. EntS (TC 2.A.1.38) family.

It localises to the cell inner membrane. Functionally, component of an export pathway for enterobactin. The sequence is that of Enterobactin exporter EntS from Shigella flexneri.